A 276-amino-acid polypeptide reads, in one-letter code: Glutamate racemase (276 aa).

Residues 9–10 (DS) and 41–42 (YG) contribute to the substrate site. Cys72 serves as the catalytic Proton donor/acceptor. Position 73–74 (73–74 (NT)) interacts with substrate. Cys183 (proton donor/acceptor) is an active-site residue. Substrate is bound at residue 184-185 (TH).

It belongs to the aspartate/glutamate racemases family.

The enzyme catalyses L-glutamate = D-glutamate. It participates in cell wall biogenesis; peptidoglycan biosynthesis. Functionally, provides the (R)-glutamate required for cell wall biosynthesis. This is Glutamate racemase from Shouchella clausii (strain KSM-K16) (Alkalihalobacillus clausii).